We begin with the raw amino-acid sequence, 53 residues long: Unknown protein from 2D-PAGE of needles (53 aa).

In Pinus pinaster (Maritime pine), this protein is Unknown protein from 2D-PAGE of needles.